The chain runs to 1848 residues: Histone-lysine N-methyltransferase, H3 lysine-79 specific (1848 aa).

The DOT1 domain maps to Asp19–Lys336. S-adenosyl-L-methionine is bound by residues Tyr142–Thr145, Phe165–Gln174, Glu192, and Asp228–Phe229. 14 disordered regions span residues Lys338–Ala537, Ala558–Arg593, Leu886–Val908, Pro960–Leu996, Leu1033–Leu1075, His1165–Val1190, Gln1221–Ser1333, Gln1345–Gly1374, Val1432–Ala1463, Ala1486–Tyr1508, Glu1529–Glu1559, Lys1573–His1604, Ser1637–Pro1713, and Gln1731–Thr1757. Positions Gly339–Ala360 are enriched in basic and acidic residues. The span at Gln364 to Asn373 shows a compositional bias: basic residues. Positions Ala391–Ser405 are enriched in low complexity. Over residues Ser419–Arg428 the composition is skewed to polar residues. 2 stretches are compositionally biased toward low complexity: residues Gln429 to Gln439 and Asp453 to Gly474. Phosphoserine occurs at positions 491, 492, and 494. Gly residues predominate over residues Gly507–Val518. 2 stretches are compositionally biased toward basic residues: residues Thr526–Arg535 and Arg582–Arg593. Over residues Gln1221–Gln1235 the composition is skewed to low complexity. A compositionally biased stretch (basic residues) spans His1236 to His1263. A compositionally biased stretch (low complexity) spans Glu1289 to Pro1300. Ser1318, Ser1324, and Ser1325 each carry phosphoserine. The span at Gln1532–Ser1545 shows a compositional bias: low complexity. Residues Tyr1574–Arg1583 are compositionally biased toward basic and acidic residues. Low complexity-rich tracts occupy residues Ala1585 to Gly1598 and His1681 to Ser1696. The span at Cys1697–Gly1706 shows a compositional bias: polar residues.

The protein belongs to the class I-like SAM-binding methyltransferase superfamily. DOT1 family. In terms of tissue distribution, broadly expressed in most tissues. Expressed in a large subset of neurons and in a small subset of glial cells.

The protein resides in the nucleus. The catalysed reaction is L-lysyl(79)-[histone H3] + 3 S-adenosyl-L-methionine = N(6),N(6),N(6)-trimethyl-L-lysyl(79)-[histone H3] + 3 S-adenosyl-L-homocysteine + 3 H(+). Its function is as follows. Histone methyltransferase. Methylates 'Lys-79' of histone H3. Required for Polycomb Group (PcG) and trithorax Group (trxG) maintenance of expression. Also involved in telomeric silencing but do not in centric heterochromatin. Probably participates in pairing sensitivity. This chain is Histone-lysine N-methyltransferase, H3 lysine-79 specific (gpp), found in Drosophila melanogaster (Fruit fly).